Here is a 943-residue protein sequence, read N- to C-terminus: Translation initiation factor IF-2 (943 aa).

A disordered region spans residues 30 to 357 (SVKSHSSSVE…KPVTERKFHE (328 aa)). Basic and acidic residues-rich tracts occupy residues 69-82 (PKEEKVEPKVDKAS), 112-137 (FKAEREARAKAEAERRKNGGGRDNRN), 145-155 (QGKRHNNDRRN), 163-196 (DHNKGNRDNSTNHDRNFQGKLRNDQNQNNRRDNA), and 224-253 (RQSETRFREEKAAEQRRAKEQEKARKEKQQ). The segment covering 254 to 266 (VKVAVQKAAAETK) has biased composition (low complexity). The span at 296-309 (KSRDNRRVNEDGPK) shows a compositional bias: basic and acidic residues. The segment covering 313-332 (NNKWNNQNQVRNQRNSNWNK) has biased composition (low complexity). A tr-type G domain is found at 445–614 (ERAPVVTIMG…LLVAEVEELK (170 aa)). The segment at 454–461 (GHVDHGKT) is G1. 454 to 461 (GHVDHGKT) is a GTP binding site. A G2 region spans residues 479-483 (GITQH). A G3 region spans residues 500–503 (DTPG). Residues 500–504 (DTPGH) and 554–557 (NKID) contribute to the GTP site. The segment at 554–557 (NKID) is G4. The segment at 590-592 (SAK) is G5.

The protein belongs to the TRAFAC class translation factor GTPase superfamily. Classic translation factor GTPase family. IF-2 subfamily.

It localises to the cytoplasm. Its function is as follows. One of the essential components for the initiation of protein synthesis. Protects formylmethionyl-tRNA from spontaneous hydrolysis and promotes its binding to the 30S ribosomal subunits. Also involved in the hydrolysis of GTP during the formation of the 70S ribosomal complex. This is Translation initiation factor IF-2 from Streptococcus thermophilus (strain ATCC BAA-250 / LMG 18311).